The primary structure comprises 197 residues: Nascent polypeptide-associated complex subunit alpha (197 aa).

Positions 1–20 (MAEPVEDSVDEISSEGDSDV) are enriched in acidic residues. Disordered stretches follow at residues 1–46 (MAEP…RKLL) and 120–154 (GADRGTDSSAAAHASGHDHAHDHDHSHGDCASKAD). In terms of domain architecture, NAC-A/B spans 36-101 (DKNERKSRKL…AKVEDMSQNS (66 aa)). Basic and acidic residues predominate over residues 134-154 (SGHDHAHDHDHSHGDCASKAD). Residues 158–195 (VNQSDIDLVVSQVGCTREQAVEALIKNKGDIVETIMQL) enclose the UBA domain.

It belongs to the NAC-alpha family.

May promote appropriate targeting of ribosome-nascent polypeptide complexes. The protein is Nascent polypeptide-associated complex subunit alpha of Babesia divergens.